The following is a 405-amino-acid chain: Cysteine desulfurase IscS (405 aa).

Pyridoxal 5'-phosphate-binding positions include 75-76, asparagine 156, glutamine 184, and 204-206; these read AT and SAH. N6-(pyridoxal phosphate)lysine is present on lysine 207. Threonine 244 lines the pyridoxal 5'-phosphate pocket. Cysteine 329 (cysteine persulfide intermediate) is an active-site residue. Cysteine 329 is a [2Fe-2S] cluster binding site.

The protein belongs to the class-V pyridoxal-phosphate-dependent aminotransferase family. NifS/IscS subfamily. Homodimer. Forms a heterotetramer with IscU, interacts with other sulfur acceptors. It depends on pyridoxal 5'-phosphate as a cofactor.

It localises to the cytoplasm. It catalyses the reaction (sulfur carrier)-H + L-cysteine = (sulfur carrier)-SH + L-alanine. The protein operates within cofactor biosynthesis; iron-sulfur cluster biosynthesis. Master enzyme that delivers sulfur to a number of partners involved in Fe-S cluster assembly, tRNA modification or cofactor biosynthesis. Catalyzes the removal of elemental sulfur atoms from cysteine to produce alanine. Functions as a sulfur delivery protein for Fe-S cluster synthesis onto IscU, an Fe-S scaffold assembly protein, as well as other S acceptor proteins. This Acinetobacter baumannii (strain SDF) protein is Cysteine desulfurase IscS.